We begin with the raw amino-acid sequence, 1009 residues long: Glutamate receptor ionotropic, delta-1 (1009 aa).

The signal sequence occupies residues 1–20 (MEALTLWLLPWICQCVTVRA). The tract at residues 21-436 (DSIIHIGAIF…ERPMGSRLQG (416 aa)) is interaction with CBLN1. Residues 21-562 (DSIIHIGAIF…SIFSLFAPFD (542 aa)) lie on the Extracellular side of the membrane. 3 disulfide bridges follow: Cys80-Cys351, Cys96-Cys128, and Cys294-Cys306. N-linked (GlcNAc...) asparagine glycans are attached at residues Asn131 and Asn200. 2 N-linked (GlcNAc...) asparagine glycosylation sites follow: Asn422 and Asn498. Glu527, Val530, and Asp531 together coordinate Ca(2+). Residues 563–583 (FAVWACIAAAIPVVGVLIFVL) traverse the membrane as a helical segment. The Cytoplasmic portion of the chain corresponds to 584-637 (NRIQAVRSQSATQPRPSASATLHSAIWIVYGAFVQQGGESSVNSVAMRIVMGSW). The helical transmembrane segment at 638–658 (WLFTLIVCSSYTANLAAFLTV) threads the bilayer. Residues 659-830 (SRMDNPIRTF…TEGKSLKLHS (172 aa)) lie on the Extracellular side of the membrane. The Ca(2+) site is built by Asp753, Asp755, and Ser757. The chain crosses the membrane as a helical span at residues 831–851 (FAGVFCILAIGLLLACLVAAL). The Cytoplasmic portion of the chain corresponds to 852 to 1009 (ELWWNSNRCH…ALDTSHGTSI (158 aa)). The segment covering 931–942 (LPEQSSHGTSRT) has biased composition (polar residues). Positions 931–960 (LPEQSSHGTSRTLSSGPSSNLPLPLSSSAT) are disordered. Low complexity predominate over residues 943–958 (LSSGPSSNLPLPLSSS).

This sequence belongs to the glutamate-gated ion channel (TC 1.A.10.1) family. GRID1 subfamily. As to quaternary structure, homodimer. Interacts (via extracellular N-terminal domain) with CBLN1 (via C1q domain), and more weakly with CBLN2; the interactions mediate the trans-synaptic adhesion complexes also with neurexins and are required for ligand-gated cation channel activity. As to expression, equally in forebrain and cerebellum.

The protein resides in the postsynaptic cell membrane. The enzyme catalyses Ca(2+)(in) = Ca(2+)(out). The catalysed reaction is Na(+)(in) = Na(+)(out). Member of the ionotropic glutamate receptor family, which plays a crucial role in synaptic organization and signal transduction in the central nervous system. Although it shares structural features with ionotropic glutamate receptors, does not bind glutamate as a primary ligand. Instead, forms trans-synaptic adhesion complexes with presynaptic neurexins and cerebellins, regulating NMDA and AMPA receptor activity and influencing synaptic plasticity through signal transduction. In the presence of NRX1B-CBLN1, forms cation-selective channels that are proposed to be gated by glycine and D-serine. However, recent research disputes this ligand-gated cation channel activity. Cation-selective ion channel can be triggered by GRM1 in dopaminergic neurons. Also acts as a receptor for GABA, modulating inhibitory synaptic plasticity through non-ionotropic mechanisms. In Mus musculus (Mouse), this protein is Glutamate receptor ionotropic, delta-1 (Grid1).